The sequence spans 499 residues: Bifunctional purine biosynthesis protein PurH (499 aa).

In terms of domain architecture, MGS-like spans 1–144 (MIKRALISVF…KNFKDVVVLT (144 aa)).

The protein belongs to the PurH family.

It catalyses the reaction (6R)-10-formyltetrahydrofolate + 5-amino-1-(5-phospho-beta-D-ribosyl)imidazole-4-carboxamide = 5-formamido-1-(5-phospho-D-ribosyl)imidazole-4-carboxamide + (6S)-5,6,7,8-tetrahydrofolate. It carries out the reaction IMP + H2O = 5-formamido-1-(5-phospho-D-ribosyl)imidazole-4-carboxamide. It participates in purine metabolism; IMP biosynthesis via de novo pathway; 5-formamido-1-(5-phospho-D-ribosyl)imidazole-4-carboxamide from 5-amino-1-(5-phospho-D-ribosyl)imidazole-4-carboxamide (10-formyl THF route): step 1/1. Its pathway is purine metabolism; IMP biosynthesis via de novo pathway; IMP from 5-formamido-1-(5-phospho-D-ribosyl)imidazole-4-carboxamide: step 1/1. In Clostridium botulinum (strain Loch Maree / Type A3), this protein is Bifunctional purine biosynthesis protein PurH.